Consider the following 239-residue polypeptide: Phosphoadenosine 5'-phosphosulfate reductase (239 aa).

The Nucleophile; cysteine thiosulfonate intermediate role is filled by C235.

The protein belongs to the PAPS reductase family. CysH subfamily.

Its subcellular location is the cytoplasm. It carries out the reaction [thioredoxin]-disulfide + sulfite + adenosine 3',5'-bisphosphate + 2 H(+) = [thioredoxin]-dithiol + 3'-phosphoadenylyl sulfate. Its pathway is sulfur metabolism; hydrogen sulfide biosynthesis; sulfite from sulfate: step 3/3. Its function is as follows. Catalyzes the formation of sulfite from phosphoadenosine 5'-phosphosulfate (PAPS) using thioredoxin as an electron donor. This chain is Phosphoadenosine 5'-phosphosulfate reductase, found in Thiocapsa roseopersicina.